We begin with the raw amino-acid sequence, 170 residues long: Negative modulator of initiation of replication (170 aa).

Residues N139–K145 are interaction with DNA.

This sequence belongs to the SeqA family. In terms of assembly, homodimer. Polymerizes to form helical filaments.

Its subcellular location is the cytoplasm. Its function is as follows. Negative regulator of replication initiation, which contributes to regulation of DNA replication and ensures that replication initiation occurs exactly once per chromosome per cell cycle. Binds to pairs of hemimethylated GATC sequences in the oriC region, thus preventing assembly of replication proteins and re-initiation at newly replicated origins. Repression is relieved when the region becomes fully methylated. The sequence is that of Negative modulator of initiation of replication from Tolumonas auensis (strain DSM 9187 / NBRC 110442 / TA 4).